Here is a 496-residue protein sequence, read N- to C-terminus: 3-octaprenyl-4-hydroxybenzoate carboxy-lyase (496 aa).

Residue Asn181 coordinates Mn(2+). Residues Ile184–Arg186, Arg198–Leu200, and Arg203–Gly204 each bind prenylated FMN. A Mn(2+)-binding site is contributed by Glu247. Residue Asp296 is the Proton donor of the active site.

This sequence belongs to the UbiD family. Homohexamer. It depends on prenylated FMN as a cofactor. Mn(2+) serves as cofactor.

The protein localises to the cell membrane. It catalyses the reaction a 4-hydroxy-3-(all-trans-polyprenyl)benzoate + H(+) = a 2-(all-trans-polyprenyl)phenol + CO2. It functions in the pathway cofactor biosynthesis; ubiquinone biosynthesis. Catalyzes the decarboxylation of 3-octaprenyl-4-hydroxy benzoate to 2-octaprenylphenol, an intermediate step in ubiquinone biosynthesis. In Aromatoleum aromaticum (strain DSM 19018 / LMG 30748 / EbN1) (Azoarcus sp. (strain EbN1)), this protein is 3-octaprenyl-4-hydroxybenzoate carboxy-lyase.